Reading from the N-terminus, the 57-residue chain is Major exported protein (57 aa).

The protein belongs to the hcp1 family. Homodimer.

It is found in the secreted. This chain is Major exported protein, found in Pseudomonas syringae pv. ribicola.